Consider the following 464-residue polypeptide: Adenosylhomocysteinase (464 aa).

The substrate site is built by Thr56, Asp131, and Glu190. Thr191–Thr193 contributes to the NAD(+) binding site. Residues Lys220 and Asp224 each coordinate substrate. NAD(+) contacts are provided by residues Asn225, Gly254–Gly259, Glu277, Asn312, Ile333–His335, and Asn378.

This sequence belongs to the adenosylhomocysteinase family. The cofactor is NAD(+).

It is found in the cytoplasm. It catalyses the reaction S-adenosyl-L-homocysteine + H2O = L-homocysteine + adenosine. Its pathway is amino-acid biosynthesis; L-homocysteine biosynthesis; L-homocysteine from S-adenosyl-L-homocysteine: step 1/1. Functionally, may play a key role in the regulation of the intracellular concentration of adenosylhomocysteine. This chain is Adenosylhomocysteinase, found in Zymomonas mobilis subsp. mobilis (strain ATCC 31821 / ZM4 / CP4).